The sequence spans 590 residues: MHRYRSHTCGALRESHIDQTVRVSGWCHRIRDHGGLLFIDLRDHYGLTQCVADPDSPAFKDAEKLRAEWVVKIDGKVRRRPEGTDNADLPTGQVEIFITEIEVLGPAGELPLPVFGEQEYPEDIRLKYRFLDLRREKLHQNIMTRGAIVDSMRKRMKEQGFFEFQTPILTASSPEGARDFLVPSRIHPGRFYALPQAPQQYKQLLMMSGFDRYFQIAPCFRDEDPRADRLPGEFYQLDVEMSFITQEDVFAAMEPVITGVFEEFAKGKRVNSVWPRIPFAEAMQKYGSDKPDLRNPIEMQDVSEHFRGSGFKVFARMLEEPRNQVWAIPGKGGGSRAFCDRMNSWAQGEGQPGLGYIMWREGNEGAGPLANNIGPERTEAIRIALGLGAGDAAFFVAGDPAKFVRFAGLARTRVGEELNLVDKEQFALAWVVDFPMYEYNEDDKKVDFSHNPFSMPQGGMEALVTQDPLNIKAFQYDITCNGFEIASGGIRNHRPEAMVKAFEIAGYGEQEVVDRFGGMYRAFQYGAPPHGGMAAGVDRIVMLLCGTNNLREISLFPMNQRAEDLLMGAPSEVTPKQLRELHIRLNLQEE.

Glu-175 is an L-aspartate binding site. The tract at residues 199–202 (QQYK) is aspartate. Arg-221 and His-450 together coordinate L-aspartate. Residue 221-223 (RDE) participates in ATP binding. ATP is bound at residue Glu-484. Residue Arg-491 coordinates L-aspartate. Position 536–539 (536–539 (GVDR)) interacts with ATP.

The protein belongs to the class-II aminoacyl-tRNA synthetase family. Type 1 subfamily. Homodimer.

The protein resides in the cytoplasm. The catalysed reaction is tRNA(Asx) + L-aspartate + ATP = L-aspartyl-tRNA(Asx) + AMP + diphosphate. Aspartyl-tRNA synthetase with relaxed tRNA specificity since it is able to aspartylate not only its cognate tRNA(Asp) but also tRNA(Asn). Reaction proceeds in two steps: L-aspartate is first activated by ATP to form Asp-AMP and then transferred to the acceptor end of tRNA(Asp/Asn). The polypeptide is Aspartate--tRNA(Asp/Asn) ligase (Rhodopseudomonas palustris (strain BisA53)).